Consider the following 270-residue polypeptide: Putative phosphoenolpyruvate synthase regulatory protein (270 aa).

ADP is bound at residue 150–157 (GVSRCGKT).

Belongs to the pyruvate, phosphate/water dikinase regulatory protein family. PSRP subfamily.

It carries out the reaction [pyruvate, water dikinase] + ADP = [pyruvate, water dikinase]-phosphate + AMP + H(+). The catalysed reaction is [pyruvate, water dikinase]-phosphate + phosphate + H(+) = [pyruvate, water dikinase] + diphosphate. Functionally, bifunctional serine/threonine kinase and phosphorylase involved in the regulation of the phosphoenolpyruvate synthase (PEPS) by catalyzing its phosphorylation/dephosphorylation. This is Putative phosphoenolpyruvate synthase regulatory protein from Shewanella sediminis (strain HAW-EB3).